Consider the following 286-residue polypeptide: Energy-coupling factor transporter ATP-binding protein EcfA2 (286 aa).

The ABC transporter domain occupies 3–246 (IRFDNVSYTY…KKKLADWHIG (244 aa)). 40-47 (GQTGSGKS) serves as a coordination point for ATP.

This sequence belongs to the ABC transporter superfamily. Energy-coupling factor EcfA family. Forms a stable energy-coupling factor (ECF) transporter complex composed of 2 membrane-embedded substrate-binding proteins (S component), 2 ATP-binding proteins (A component) and 2 transmembrane proteins (T component).

It localises to the cell membrane. ATP-binding (A) component of a common energy-coupling factor (ECF) ABC-transporter complex. Unlike classic ABC transporters this ECF transporter provides the energy necessary to transport a number of different substrates. The polypeptide is Energy-coupling factor transporter ATP-binding protein EcfA2 (Staphylococcus aureus (strain USA300)).